The chain runs to 518 residues: Glutamate--cysteine ligase (518 aa).

It belongs to the glutamate--cysteine ligase type 1 family. Type 1 subfamily.

The enzyme catalyses L-cysteine + L-glutamate + ATP = gamma-L-glutamyl-L-cysteine + ADP + phosphate + H(+). It participates in sulfur metabolism; glutathione biosynthesis; glutathione from L-cysteine and L-glutamate: step 1/2. The polypeptide is Glutamate--cysteine ligase (gshA) (Buchnera aphidicola subsp. Acyrthosiphon pisum (strain APS) (Acyrthosiphon pisum symbiotic bacterium)).